Reading from the N-terminus, the 448-residue chain is MSRRYFGTDGIRGRANGLITPELAMKVGQAAGLVFQRGEHRHRVVIGKDTRLSGYMIEYALVAGFTSVGMDVLLLGPMPTPAVAMLTKSMRADLGVMISASHNLFEDNGIKMFGPRGFKLSDEVEKKIEKLLDENLDKKLAQSRNLGRARRIDGVHDRYIEFAKRTLPRELSLEGLRVVVDCAHGAAYKVVPEALWELGADVVPIGVEPDGLNINKECGSTAPEALCRKVREMRGDIGIALDGDADRVIIVDERGHVVDGDQLLAVIAESWKEDGRLTKPGIVATVMSNLGLERFLKDRDLSLVRTPVGDRYVLEQMLKQGYNLGGEQSGHIILSDYATTGDGFVSALQVLAVVQKLGRPVSQVCHKFEPLPQILKNFRYRNGKPLDRAEVKSAITAGEKRLNGHGRLLVRSSGTEPVIRVMGEGDDRILVEEVVDTIVSALGNPAVA.

Ser-101 serves as the catalytic Phosphoserine intermediate. Residues Ser-101, Asp-242, Asp-244, and Asp-246 each coordinate Mg(2+). Ser-101 is modified (phosphoserine).

The protein belongs to the phosphohexose mutase family. The cofactor is Mg(2+). Activated by phosphorylation.

It carries out the reaction alpha-D-glucosamine 1-phosphate = D-glucosamine 6-phosphate. Its function is as follows. Catalyzes the conversion of glucosamine-6-phosphate to glucosamine-1-phosphate. The protein is Phosphoglucosamine mutase of Nitrobacter winogradskyi (strain ATCC 25391 / DSM 10237 / CIP 104748 / NCIMB 11846 / Nb-255).